The sequence spans 571 residues: Potassium-transporting ATPase potassium-binding subunit (571 aa).

The next 12 membrane-spanning stretches (helical) occupy residues 5–25 (GWMQIALYGAVVLALVRPLGG), 64–84 (LAYAGAMVLFNVAGFVLLYAL), 136–156 (GLTHQNFVSAASGMAVAVALI), 179–199 (LYVLLPLCTVLALFYVSQGMP), 220–240 (VGPVASQVAIKMLGTNGGGFF), 254–274 (LSNFLQMLSIFVIGAALTNVF), 285–305 (WAILTAMGLLFLAGVTVTYWA), 330–350 (FGIAASALFAVITTAASCGAV), 375–395 (IIGGVGAGLYGMLVFVVVAIF), 421–441 (MLGILCLPLMMLGFTAFATVV), 488–508 (LAIGMLVGRFFVKIPVLAIAG), and 527–547 (GGLFVGLLVGVVLIIGGLTFF).

This sequence belongs to the KdpA family. As to quaternary structure, the system is composed of three essential subunits: KdpA, KdpB and KdpC.

It is found in the cell inner membrane. Functionally, part of the high-affinity ATP-driven potassium transport (or Kdp) system, which catalyzes the hydrolysis of ATP coupled with the electrogenic transport of potassium into the cytoplasm. This subunit binds the periplasmic potassium ions and delivers the ions to the membrane domain of KdpB through an intramembrane tunnel. The chain is Potassium-transporting ATPase potassium-binding subunit from Methylorubrum extorquens (strain PA1) (Methylobacterium extorquens).